The primary structure comprises 377 residues: MSRGIIIIGSGFAARQLVKNIRKQDAHVPLTLIAADSMDEYNKPDLSHVISQSQRADDLTRQLAGEFAEQFNLRLFPHTWVADIDADAHVVKSQDKQWQYDKLVLATGATAFVPPITGRELMLTLNSQQEYRACETQLRDAQRVMIVGGGLIGSELAMDFCRAGKTVTLMDNAASLLASLMPPEVSSRLQHHLTDMGVHLLLKSQLQKLEKTEAGIRATLVSQRNIEVDAVIAATGLRPETALARRAGVAVNRGVCVDSYLQTSHPDIYAIGDCAEINGQVLPFLQPIQLSAMYLAKNLLGGNAPLKLPAMLVKVKTPELPLHLAGETQRRDLSWQITAESDGMIAKGMSGEGQLRAFVVSEDRMKEAFALLKTLSV.

Belongs to the FAD-dependent oxidoreductase family. Requires FAD as cofactor.

The protein localises to the cytoplasm. The catalysed reaction is 2 reduced [nitric oxide reductase rubredoxin domain] + NAD(+) + H(+) = 2 oxidized [nitric oxide reductase rubredoxin domain] + NADH. The protein operates within nitrogen metabolism; nitric oxide reduction. Functionally, one of at least two accessory proteins for anaerobic nitric oxide (NO) reductase. Reduces the rubredoxin moiety of NO reductase. The chain is Nitric oxide reductase FlRd-NAD(+) reductase from Salmonella schwarzengrund (strain CVM19633).